Consider the following 330-residue polypeptide: Tryptophan--tRNA ligase (330 aa).

Residues 10-12 (QTT) and 18-19 (GN) each bind ATP. The 'HIGH' region signature appears at 11–19 (TTGALHLGN). Asp-134 lines the L-tryptophan pocket. ATP-binding positions include 146 to 148 (GED), Ile-186, and 195 to 199 (KMSKS). The 'KMSKS' region motif lies at 195–199 (KMSKS).

The protein belongs to the class-I aminoacyl-tRNA synthetase family. As to quaternary structure, homodimer.

It is found in the cytoplasm. It catalyses the reaction tRNA(Trp) + L-tryptophan + ATP = L-tryptophyl-tRNA(Trp) + AMP + diphosphate + H(+). In terms of biological role, catalyzes the attachment of tryptophan to tRNA(Trp). The sequence is that of Tryptophan--tRNA ligase from Rickettsia prowazekii (strain Madrid E).